A 155-amino-acid polypeptide reads, in one-letter code: Protein-export protein SecB (155 aa).

It belongs to the SecB family. Homotetramer, a dimer of dimers. One homotetramer interacts with 1 SecA dimer.

The protein resides in the cytoplasm. Functionally, one of the proteins required for the normal export of preproteins out of the cell cytoplasm. It is a molecular chaperone that binds to a subset of precursor proteins, maintaining them in a translocation-competent state. It also specifically binds to its receptor SecA. The protein is Protein-export protein SecB of Vibrio vulnificus (strain CMCP6).